Consider the following 377-residue polypeptide: Gap junction gamma-1 protein (377 aa).

Residues Met1–Thr18 are Cytoplasmic-facing. Residues Phe19 to Gly39 form a helical membrane-spanning segment. Residues Gly40–Arg75 lie on the Extracellular side of the membrane. Residues Phe76 to Met96 form a helical membrane-spanning segment. Residues His97–Lys174 are Cytoplasmic-facing. Residues Asp129–Gly163 form a disordered region. A compositionally biased stretch (acidic residues) spans Glu131–Lys151. A helical transmembrane segment spans residues Val175 to Leu197. At Tyr198 to Thr228 the chain is on the extracellular side. A helical transmembrane segment spans residues Ile229–Leu249. The Cytoplasmic segment spans residues Phe250–Leu377. Disordered stretches follow at residues Lys265–Gly294 and Leu334–Leu377. Over residues Thr337 to Asn362 the composition is skewed to polar residues.

This sequence belongs to the connexin family. Gamma-type subfamily. A connexon is composed of a hexamer of connexins.

The protein localises to the cell membrane. Its subcellular location is the cell junction. It localises to the gap junction. In terms of biological role, one gap junction consists of a cluster of closely packed pairs of transmembrane channels, the connexons, through which materials of low MW diffuse from one cell to a neighboring cell. This is Gap junction gamma-1 protein (gjc1) from Xenopus tropicalis (Western clawed frog).